A 248-amino-acid chain; its full sequence is MSFVVIIPARFASTRLPGKPLVDINGKPMIVHVLERARESGADRVIVATDHEDVARAVEAAGGEVCMTRADHQSGTERLAEVVEKCGFSDDTVIVNVQGDEPMIPAAIIRQVAENLAQRQVGMATLAVPIHHAEEAFNPNAVKVVMDAEGYALYFSRAAIPWDRDRFAASQEVIGDTFLRHLGIYGYRAGFIRRYVTWAPSPLEHIEMLEQLRVLWYGEKIHVAVAQEVPGTGVDTPEDLERVRAELH.

This sequence belongs to the KdsB family.

Its subcellular location is the cytoplasm. The catalysed reaction is 3-deoxy-alpha-D-manno-oct-2-ulosonate + CTP = CMP-3-deoxy-beta-D-manno-octulosonate + diphosphate. Its pathway is nucleotide-sugar biosynthesis; CMP-3-deoxy-D-manno-octulosonate biosynthesis; CMP-3-deoxy-D-manno-octulosonate from 3-deoxy-D-manno-octulosonate and CTP: step 1/1. It participates in bacterial outer membrane biogenesis; lipopolysaccharide biosynthesis. Its function is as follows. Activates KDO (a required 8-carbon sugar) for incorporation into bacterial lipopolysaccharide in Gram-negative bacteria. This chain is 3-deoxy-manno-octulosonate cytidylyltransferase, found in Enterobacter sp. (strain 638).